The primary structure comprises 266 residues: Glucosamine-6-phosphate deaminase (266 aa).

The Proton acceptor; for enolization step role is filled by Asp72. The active-site For ring-opening step is the Asp141. His143 (proton acceptor; for ring-opening step) is an active-site residue. Catalysis depends on Glu148, which acts as the For ring-opening step.

It belongs to the glucosamine/galactosamine-6-phosphate isomerase family. NagB subfamily. In terms of assembly, homohexamer.

The catalysed reaction is alpha-D-glucosamine 6-phosphate + H2O = beta-D-fructose 6-phosphate + NH4(+). Its pathway is amino-sugar metabolism; N-acetylneuraminate degradation; D-fructose 6-phosphate from N-acetylneuraminate: step 5/5. Its activity is regulated as follows. Allosterically activated by N-acetylglucosamine 6-phosphate (GlcNAc6P). Catalyzes the reversible isomerization-deamination of glucosamine 6-phosphate (GlcN6P) to form fructose 6-phosphate (Fru6P) and ammonium ion. This is Glucosamine-6-phosphate deaminase from Aeromonas salmonicida (strain A449).